Here is a 355-residue protein sequence, read N- to C-terminus: UDP-N-acetylglucosamine--N-acetylmuramyl-(pentapeptide) pyrophosphoryl-undecaprenol N-acetylglucosamine transferase (355 aa).

Residues 14-16 (TGG), asparagine 126, arginine 164, serine 190, isoleucine 243, 262-267 (ALTVAE), and glutamine 288 each bind UDP-N-acetyl-alpha-D-glucosamine.

It belongs to the glycosyltransferase 28 family. MurG subfamily.

It localises to the cell inner membrane. It catalyses the reaction di-trans,octa-cis-undecaprenyl diphospho-N-acetyl-alpha-D-muramoyl-L-alanyl-D-glutamyl-meso-2,6-diaminopimeloyl-D-alanyl-D-alanine + UDP-N-acetyl-alpha-D-glucosamine = di-trans,octa-cis-undecaprenyl diphospho-[N-acetyl-alpha-D-glucosaminyl-(1-&gt;4)]-N-acetyl-alpha-D-muramoyl-L-alanyl-D-glutamyl-meso-2,6-diaminopimeloyl-D-alanyl-D-alanine + UDP + H(+). Its pathway is cell wall biogenesis; peptidoglycan biosynthesis. Cell wall formation. Catalyzes the transfer of a GlcNAc subunit on undecaprenyl-pyrophosphoryl-MurNAc-pentapeptide (lipid intermediate I) to form undecaprenyl-pyrophosphoryl-MurNAc-(pentapeptide)GlcNAc (lipid intermediate II). This chain is UDP-N-acetylglucosamine--N-acetylmuramyl-(pentapeptide) pyrophosphoryl-undecaprenol N-acetylglucosamine transferase, found in Psychromonas ingrahamii (strain DSM 17664 / CCUG 51855 / 37).